The following is a 126-amino-acid chain: Ribulose bisphosphate carboxylase small subunit, chloroplastic 1 (126 aa).

The protein belongs to the RuBisCO small chain family. Heterohexadecamer of 8 large and 8 small subunits.

The protein localises to the plastid. Its subcellular location is the chloroplast. Its function is as follows. RuBisCO catalyzes two reactions: the carboxylation of D-ribulose 1,5-bisphosphate, the primary event in carbon dioxide fixation, as well as the oxidative fragmentation of the pentose substrate. Both reactions occur simultaneously and in competition at the same active site. Although the small subunit is not catalytic it is essential for maximal activity. The sequence is that of Ribulose bisphosphate carboxylase small subunit, chloroplastic 1 from Acetabularia peniculus (Green alga).